The following is a 462-amino-acid chain: Citrate synthase, mitochondrial (462 aa).

Residues 1-21 (MRSINQLLKQASLSQKSQYNF) constitute a mitochondrion transit peptide. Active-site residues include His300, His346, and Asp401.

It belongs to the citrate synthase family. Homodimer.

The protein resides in the mitochondrion matrix. It is found in the cytoplasm. Its subcellular location is the cytoskeleton. It carries out the reaction oxaloacetate + acetyl-CoA + H2O = citrate + CoA + H(+). Its pathway is carbohydrate metabolism; tricarboxylic acid cycle; isocitrate from oxaloacetate: step 1/2. In terms of biological role, structural protein involved in oral morphogenesis and in pronuclear behavior during conjugation. Respiratory enzyme. The protein is Citrate synthase, mitochondrial of Tetrahymena thermophila.